A 209-amino-acid chain; its full sequence is Large ribosomal subunit protein uL3 (209 aa).

An N5-methylglutamine modification is found at glutamine 150.

The protein belongs to the universal ribosomal protein uL3 family. In terms of assembly, part of the 50S ribosomal subunit. Forms a cluster with proteins L14 and L19. Methylated by PrmB.

Its function is as follows. One of the primary rRNA binding proteins, it binds directly near the 3'-end of the 23S rRNA, where it nucleates assembly of the 50S subunit. This Vibrio cholerae serotype O1 (strain ATCC 39541 / Classical Ogawa 395 / O395) protein is Large ribosomal subunit protein uL3.